Here is a 417-residue protein sequence, read N- to C-terminus: Serine hydroxymethyltransferase (417 aa).

An N6-acetyllysine modification is found at Lys-54. (6S)-5,6,7,8-tetrahydrofolate is bound by residues Leu-121 and 125–127 (GHL). N6-(pyridoxal phosphate)lysine is present on Lys-229. 3 positions are modified to N6-acetyllysine: Lys-250, Lys-285, and Lys-354. 355-357 (SPF) contributes to the (6S)-5,6,7,8-tetrahydrofolate binding site. At Lys-375 the chain carries N6-acetyllysine.

The protein belongs to the SHMT family. In terms of assembly, homodimer. Pyridoxal 5'-phosphate is required as a cofactor.

It is found in the cytoplasm. The enzyme catalyses (6R)-5,10-methylene-5,6,7,8-tetrahydrofolate + glycine + H2O = (6S)-5,6,7,8-tetrahydrofolate + L-serine. The protein operates within one-carbon metabolism; tetrahydrofolate interconversion. Its pathway is amino-acid biosynthesis; glycine biosynthesis; glycine from L-serine: step 1/1. Catalyzes the reversible interconversion of serine and glycine with tetrahydrofolate (THF) serving as the one-carbon carrier. This reaction serves as the major source of one-carbon groups required for the biosynthesis of purines, thymidylate, methionine, and other important biomolecules. Also exhibits THF-independent aldolase activity toward beta-hydroxyamino acids, producing glycine and aldehydes, via a retro-aldol mechanism. This chain is Serine hydroxymethyltransferase, found in Escherichia coli O17:K52:H18 (strain UMN026 / ExPEC).